Reading from the N-terminus, the 420-residue chain is MSQGVTAPFARHAMAYVLAGGRGSRLMELTDWRAKPAVYFGGKSRIIDFALSNALNSGIRRIAVATQYKAHSLIRHLQRGWNFFRPERNESFDILPASQRVSEEMWYRGTADAVFQNIDIIESYDPKFIVLLAGDHVYKMDYEKMLQQHVEQGADVTVGCLEVPRAEATAFGVMHTDTTDRIISFLEKPADPPAMPGKADKSLVSMGIYVFETKFLLDELRRDAADPNSSHDFGKDIIPYIVKHGKAVAHHFDKSCRRSSSEAVSYWRDVGTVDAYWAANIDLTDIVPELDLYDREWPIWTYGEITPPAKFVHDKEGRRGEAVSSLVSGGCIISGASLRHSLLFTGVRVHSFSHVENTVVLPYADIGRSCRLKNVVIDAEVKLPAGLVVGEDPEFDAKRFRRTENGICLITRAMIEKLDA.

Alpha-D-glucose 1-phosphate-binding positions include Tyr107, Gly172, 187–188, and Ser205; that span reads EK.

The protein belongs to the bacterial/plant glucose-1-phosphate adenylyltransferase family. In terms of assembly, homotetramer.

The enzyme catalyses alpha-D-glucose 1-phosphate + ATP + H(+) = ADP-alpha-D-glucose + diphosphate. It participates in glycan biosynthesis; glycogen biosynthesis. Functionally, involved in the biosynthesis of ADP-glucose, a building block required for the elongation reactions to produce glycogen. Catalyzes the reaction between ATP and alpha-D-glucose 1-phosphate (G1P) to produce pyrophosphate and ADP-Glc. This Rhodopseudomonas palustris (strain ATCC BAA-98 / CGA009) protein is Glucose-1-phosphate adenylyltransferase.